A 400-amino-acid chain; its full sequence is Putative zinc-binding protein ORF78 (400 aa).

The interval 9-33 (LPRKRRAVAQPRTRQPPPKVHREDT) is disordered.

The protein is Putative zinc-binding protein ORF78 (ORF78) of Ictalurid herpesvirus 1 (strain Auburn) (IcHV-1).